Here is a 197-residue protein sequence, read N- to C-terminus: C4-dicarboxylate transport transcriptional regulatory protein DctR (197 aa).

A Response regulatory domain is found at 4–120 (TVHIVDDEES…HIVDIALSAI (117 aa)). 4-aspartylphosphate is present on Asp53. The interval 128 to 135 (AEAQAREA) is inter-domain linker. The HTH luxR-type domain occupies 136–197 (VAARRASLSA…RNIADLARMT (62 aa)). A DNA-binding region (H-T-H motif) is located at residues 160–179 (NKQIAERLGIAMRTVEVHRS).

Post-translationally, phosphorylated by DctS.

The protein localises to the cytoplasm. Functionally, member of the two-component regulatory system DctS/DctR involved in the transport of C4-dicarboxylates. DctR functions as a transcriptional repressor of genes for C4-dicarboxylate transport. This Rhodobacter capsulatus (Rhodopseudomonas capsulata) protein is C4-dicarboxylate transport transcriptional regulatory protein DctR (dctR).